The sequence spans 126 residues: Ribosome-binding factor A (126 aa).

It belongs to the RbfA family. As to quaternary structure, monomer. Binds 30S ribosomal subunits, but not 50S ribosomal subunits or 70S ribosomes.

It is found in the cytoplasm. Functionally, one of several proteins that assist in the late maturation steps of the functional core of the 30S ribosomal subunit. Associates with free 30S ribosomal subunits (but not with 30S subunits that are part of 70S ribosomes or polysomes). Required for efficient processing of 16S rRNA. May interact with the 5'-terminal helix region of 16S rRNA. In Haemophilus ducreyi (strain 35000HP / ATCC 700724), this protein is Ribosome-binding factor A.